Here is a 225-residue protein sequence, read N- to C-terminus: Suppressor of cytokine signaling 3 (225 aa).

The tract at residues 22-33 (LKTFSSKSEYQL) is kinase inhibitory region (KIR). Positions 34–45 (VVNAVRKLQESG) are extended SH2 subdomain (ESS). Residues 46-142 (FYWSAVTGGE…TPSFSLPPTE (97 aa)) enclose the SH2 domain. Residues 131–160 (PGTPSFSLPPTEPSSEVPEQPPAQALPGST) form a disordered region. In terms of domain architecture, SOCS box spans 177-224 (VLSRPLSSNVATLQHLCRKTVNGHLDSYEKVTQLPGPIREFLDQYDAP).

As to quaternary structure, interacts with multiple activated proteins of the tyrosine kinase signaling pathway including IGF1 receptor, insulin receptor and JAK2. Binding to JAK2 is mediated through the KIR and SH2 domains to a phosphorylated tyrosine residue within the JAK2 JH1 domain. Binds specific activated tyrosine residues of the leptin, EPO, IL12, GSCF and gp130 receptors. Interaction with CSNK1E stabilizes SOCS3 protein. Component of the probable ECS(SOCS3) E3 ubiquitin-protein ligase complex which contains CUL5, RNF7/RBX2, elongin BC complex and SOCS3. Interacts with CUL5, RNF7, ELOB and ELOC. Interacts with FGFR3. Interacts with INSR. Interacts with BCL10; this interaction may interfere with BCL10-binding with PELI2. Interacts with NOD2 (via CARD domain); the interaction promotes NOD2 degradation. In terms of processing, phosphorylated on tyrosine residues after stimulation by the cytokines, IL-2, EPO or IGF1. As to expression, low expression in lung, spleen and thymus. Expressed in Th2 but not TH1 cells.

It participates in protein modification; protein ubiquitination. Functionally, SOCS family proteins form part of a classical negative feedback system that regulates cytokine signal transduction. SOCS3 is involved in negative regulation of cytokines that signal through the JAK/STAT pathway. Inhibits cytokine signal transduction by binding to tyrosine kinase receptors including IL6ST/gp130, LIF, erythropoietin, insulin, IL12, GCSF and leptin receptors. Binding to JAK2 inhibits its kinase activity and regulates IL6 signaling. Suppresses fetal liver erythropoiesis. Regulates onset and maintenance of allergic responses mediated by T-helper type 2 cells. Probable substrate recognition component of a SCF-like ECS (Elongin BC-CUL2/5-SOCS-box protein) E3 ubiquitin-protein ligase complex which mediates the ubiquitination and subsequent proteasomal degradation of target proteins. The protein is Suppressor of cytokine signaling 3 of Mus musculus (Mouse).